An 866-amino-acid polypeptide reads, in one-letter code: N-alpha-acetyltransferase 15, NatA auxiliary subunit (866 aa).

TPR repeat units lie at residues 46–79 (GETLAMKGLTLNCLGKKEEAYELVRRGLRNDLKS), 80–113 (HVCWHVYGLLQRSDKKYDEAIKCYRNALKWDKDN), 148–184 (RASWIGYAIAYHLLEDYEMAAKILEEFRKTQQTSPDK), and 224–257 (LAVEETKGELLLQLCRLEDAADVYRGLQERNPEN). Lysine 262 carries the N6-acetyllysine modification. Residue serine 302 is modified to Phosphoserine. TPR repeat units lie at residues 374–407 (LWVQYYLAQHYDKIGQPSIALEYINTAIESTPTL), 409–441 (ELFLVKAKIYKHAGNIKEAARWMDEAQALDTAD), and 485–518 (MWFQTECAQAYKAMNKFGEALKKCHEIERHFIEI). Residues 500–866 (KFGEALKKCH…AEAEELANEI (367 aa)) form an interaction with HYPK region. Serine 537 and serine 588 each carry phosphoserine. Over residues 579–594 (EHEADTANMSDKELKK) the composition is skewed to basic and acidic residues. Residues 579 to 642 (EHEADTANMS…EEIGGPKEEL (64 aa)) are disordered. Positions 595–604 (LRNKQRRAQK) are enriched in basic residues. Positions 606-621 (AQIEEEKKNAEKEKQQ) are enriched in basic and acidic residues. A Bipartite nuclear localization signal motif is present at residues 612–629 (KKNAEKEKQQRNQKKKKD). A TPR 8 repeat occupies 672–705 (IETHLFAFEIYFRKEKFLLMLQSVKRAFAIDSSH). An N6-acetyllysine mark is found at lysine 735 and lysine 756. Phosphoserine occurs at positions 855 and 856.

Component of the N-terminal acetyltransferase A complex (also called the NatA complex) composed of NAA10 and NAA15. Within the complex interacts with NAA10. Component of the N-terminal acetyltransferase A (NatA)/HYPK complex at least composed of NAA10, NAA15 and HYPK, which has N-terminal acetyltransferase activity. In complex with NAA10, interacts with HYPK. Component of the N-terminal acetyltransferase E (NatE) complex at least composed of NAA10, NAA15 and NAA50. Within the complex interacts with NAA10; the interaction is required for binding to NAA50. Interacts with NAAT50. The interaction of the NatA complex with NAA50 reduces the acetylation activity of the NatA complex. Component of the N-terminal acetyltransferase E (NatE)/HYPK complex at least composed of NAA10, NAA15, NAA50 and HYPK. In complex with NAA10 interacts with HYPK; the interaction with HYPK reduces the capacity of the NatA complex to interact with NAA50. Interacts with NAA11. Interacts with XRCC6 and XRCC5. Cleaved by caspases during apoptosis, resulting in a stable 35 kDa fragment. Expressed at high levels in testis and in ocular endothelial cells. Also found in brain (corpus callosum), heart, colon, bone marrow and at lower levels in most adult tissues, including thyroid, liver, pancreas, mammary and salivary glands, lung, ovary, urogenital system and upper gastrointestinal tract. Overexpressed in gastric cancer, in papillary thyroid carcinomas and in a Burkitt lymphoma cell line (Daudi). Specifically suppressed in abnormal proliferating blood vessels in eyes of patients with proliferative diabetic retinopathy.

It is found in the cytoplasm. Its subcellular location is the nucleus. Functionally, auxillary subunit of N-terminal acetyltransferase complexes which display alpha (N-terminal) acetyltransferase (NAT) activity. The NAT activity may be important for vascular, hematopoietic and neuronal growth and development. Required to control retinal neovascularization in adult ocular endothelial cells. In complex with XRCC6 and XRCC5 (Ku80), up-regulates transcription from the osteocalcin promoter. This Homo sapiens (Human) protein is N-alpha-acetyltransferase 15, NatA auxiliary subunit (NAA15).